Reading from the N-terminus, the 1486-residue chain is MTKANGAEQLADWKFQYDLLTNELFHLHEFTSLLEFDPAFRHESDSFARFLADKHLELRMEEDAGAPGLEESSAMRRIRRRQKRGRGEEEGNALLKGVEELVEQKYADLRARLDRPMLKQGPRKRKQPGDAAKTALPHDSKKRKSAVVRKETNDEEHLKEEKSASPTVWSPESPQRDTYRTIHPSGDHEGYQSSSSDSFYFTTSSEDEEPTVKRSLKRKKAPVRRIKLIVHPPKQTVTNPLHILKPECSSLHEFLQSYKSLDEDISIEEFDSYIASQRKVVSAIRKGLKSGVLTYDRHTDSIQGISLKDVQNSQANKPEPITTFYQEQEKHTLRDHLNNHGVVMSRMFQDRKRGRIARARKISQMIEQHFKHVAGAEERKTKEEEKRRRALARAAVQAVKKRWNLAERAYKVLKKDEEDQLKRIQGKEHLSKMLEQSTQLLGAQLNQNDDSDDETSSQVLSENESSLGDEEMSSSSELDDSEVEAGEDDSKLTVEQLRAKYSALEHITIDGRSQNSEVSSMTENPEEDPQEYKILLSEREKAELHRTFETEENNILDEDHSSSSSFSESEISQTSSSENESLINSNSSQTPGLASLFGNVAEELSDDAHYSTEESLSSTPNEDQEGVQPNADAVSNMEIDSLEMQDKDESTNLEKLSVVDVPVPPLLRGTLRTYQKQGLNWLASLYNNNTNGILADEMGLGKTIQTIALLAYLACEKENWGPHLIIVPTSVLLNWEMEFKRFAPGFKVLSYYGSPQQRKEKRRGWNKLDAFHVCITSYQLVVHDQHSFKRKKWQYMILDEAHNIKNFKSTRWQALLNFNTRRRLLLTGTPLQNNIAELWSLLYFLMPQTALENGKISGFADLDAFQQWFGKPVDKIIAANDSEHDDETRRTVSKLHQVLRPYLLRRLKADVEKQMPAKYEHILYCRLSKRQRFLYDDFMSRAQTKATLASGNFMSIINCLMQLRKVCNHPDLFEVRPILTSFCMDRSVMSNYAHLNQLVLKNLNKHALDTVVNLQCTNLAFTQNDFNMETHYADSCARLQCVRQFSEAVEKLRKDASLPDAKDDPNVLNYQDMHEFYTGYTVRKRLRLIDQYRHTFYLNSLRCEKRPVYGINLVRLVSVHHRPPLECNVMSELMKPLETRLVTHKRIIDEFAIITPTAITLDTRVLSLGLDSEAAVHPVIKSDINTQLSRMKNPFHLLQTKLSIAFPDKSLLQYDCGKLQSLAVLLRRLKEEGHRALIFTQMTKVLDILEQFLNYHGYLYMRLDGATKIEDRQILTERFNTDPRITVFILSSRSGGLGINLTGADTVIFYDSDWNPAMDKQCQDRCHRIGQTRDVHIYRFVSEHTIESNILKKANQKRQLDNIVIQKGEFTTDYFSRLSVKDLLGSDETEEIADERPLLEDPATTADSKKLERLLAQAEDEDDVKAARLAMKEVDVDDRDFRESSTCANPSPDEDVDEEPVEDEYEGTRHVEEYMIRFIANGYLYD.

Disordered stretches follow at residues 63 to 89 (DAGA…RGEE) and 113 to 219 (LDRP…LKRK). The span at 148 to 163 (VRKETNDEEHLKEEKS) shows a compositional bias: basic and acidic residues. The span at 164–173 (ASPTVWSPES) shows a compositional bias: polar residues. The span at 174 to 190 (PQRDTYRTIHPSGDHEG) shows a compositional bias: basic and acidic residues. A compositionally biased stretch (low complexity) spans 193-204 (SSSSDSFYFTTS). An HSA domain is found at 321 to 393 (ITTFYQEQEK…EEKRRRALAR (73 aa)). 4 disordered regions span residues 446–492 (NQND…DSKL), 508–530 (TIDG…EDPQ), 548–590 (FETE…SSQT), and 606–628 (DDAH…EGVQ). Over residues 467–487 (LGDEEMSSSSELDDSEVEAGE) the composition is skewed to acidic residues. The span at 511-523 (GRSQNSEVSSMTE) shows a compositional bias: polar residues. Positions 562-588 (SSSSFSESEISQTSSSENESLINSNSS) are enriched in low complexity. In terms of domain architecture, Helicase ATP-binding spans 683–848 (ASLYNNNTNG…WSLLYFLMPQ (166 aa)). Position 696–703 (696–703 (DEMGLGKT)) interacts with ATP. Residues 799–802 (DEAH) carry the DEAH box motif. The 151-residue stretch at 1221-1371 (SLAVLLRRLK…NIVIQKGEFT (151 aa)) folds into the Helicase C-terminal domain. Positions 1436-1468 (VDDRDFRESSTCANPSPDEDVDEEPVEDEYEGT) are disordered. The span at 1452 to 1465 (PDEDVDEEPVEDEY) shows a compositional bias: acidic residues.

This sequence belongs to the SNF2/RAD54 helicase family. SWR1 subfamily. Component of the SWR1 chromatin-remodeling complex.

The protein resides in the nucleus. It catalyses the reaction ATP + H2O = ADP + phosphate + H(+). In terms of biological role, catalytic component of the SWR1 complex which mediates the ATP-dependent exchange of histone H2A for the H2A variant HZT1 leading to transcriptional regulation of selected genes by chromatin remodeling. The protein is Helicase SWR1 (SWR1) of Eremothecium gossypii (strain ATCC 10895 / CBS 109.51 / FGSC 9923 / NRRL Y-1056) (Yeast).